The sequence spans 340 residues: Dihydroorotate dehydrogenase (quinone) (340 aa).

Residues 65-69 and Thr-89 contribute to the FMN site; that span reads AGADK. Lys-69 is a binding site for substrate. Substrate is bound at residue 114 to 118; that stretch reads NRNGF. FMN contacts are provided by Asn-142 and Asn-175. Asn-175 lines the substrate pocket. Catalysis depends on Ser-178, which acts as the Nucleophile. Asn-180 lines the substrate pocket. Residues Lys-220 and Thr-248 each contribute to the FMN site. Substrate is bound at residue 249 to 250; that stretch reads NT. FMN is bound by residues Gly-271, Gly-300, and 321–322; that span reads YS.

Belongs to the dihydroorotate dehydrogenase family. Type 2 subfamily. In terms of assembly, monomer. Requires FMN as cofactor.

The protein localises to the cell membrane. The catalysed reaction is (S)-dihydroorotate + a quinone = orotate + a quinol. The protein operates within pyrimidine metabolism; UMP biosynthesis via de novo pathway; orotate from (S)-dihydroorotate (quinone route): step 1/1. Its function is as follows. Catalyzes the conversion of dihydroorotate to orotate with quinone as electron acceptor. The chain is Dihydroorotate dehydrogenase (quinone) from Actinobacillus succinogenes (strain ATCC 55618 / DSM 22257 / CCUG 43843 / 130Z).